The following is a 482-amino-acid chain: O-acyltransferase ausP (482 aa).

Residues His180 and Asp412 each act as proton acceptor in the active site.

Belongs to the plant acyltransferase family. Monomer.

The protein operates within secondary metabolite biosynthesis; terpenoid biosynthesis. O-acyltransferase; part of the gene cluster B that mediates the biosynthesis of the fungal meroterpenoid acetoxydehydroaustin. The first step of the pathway is the synthesis of 3,5-dimethylorsellinic acid by the polyketide synthase ausA. 3,5-dimethylorsellinic acid is then prenylated by the polyprenyl transferase ausN. Further epoxidation by the FAD-dependent monooxygenase ausM and cyclization by the probable terpene cyclase ausL lead to the formation of protoaustinoid A. Protoaustinoid A is then oxidized to spiro-lactone preaustinoid A3 by the combined action of the FAD-binding monooxygenases ausB and ausC, and the dioxygenase ausE. Acid-catalyzed keto-rearrangement and ring contraction of the tetraketide portion of preaustinoid A3 by ausJ lead to the formation of preaustinoid A4. The aldo-keto reductase ausK, with the help of ausH, is involved in the next step by transforming preaustinoid A4 into isoaustinone which is in turn hydroxylated by the P450 monooxygenase ausI to form austinolide. The cytochrome P450 monooxygenase ausG then modifies austinolide to austinol. Austinol is further acetylated to austin by the O-acetyltransferase ausP, which spontaneously changes to dehydroaustin. The cytochrome P450 monooxygenase then converts dehydroaustin is into 7-dehydrodehydroaustin. The hydroxylation catalyzed by ausR permits the second O-acetyltransferase ausQ to add an additional acetyl group to the molecule, leading to the formation of acetoxydehydroaustin. Due to genetic rearrangements of the clusters and the subsequent loss of some enzymes, the end product of the Penicillium brasilianum austinoid biosynthesis clusters is acetoxydehydroaustin. The polypeptide is O-acyltransferase ausP (Penicillium brasilianum).